We begin with the raw amino-acid sequence, 383 residues long: Probable L-tyrosine/L-aspartate decarboxylase (383 aa).

Lys227 carries the N6-(pyridoxal phosphate)lysine modification.

This sequence belongs to the group II decarboxylase family. MfnA subfamily. The cofactor is pyridoxal 5'-phosphate.

The enzyme catalyses L-tyrosine + H(+) = tyramine + CO2. It carries out the reaction L-aspartate + H(+) = beta-alanine + CO2. It participates in cofactor biosynthesis; methanofuran biosynthesis. The protein operates within cofactor biosynthesis; coenzyme A biosynthesis. Catalyzes the decarboxylation of L-tyrosine to produce tyramine for methanofuran biosynthesis. Can also catalyze the decarboxylation of L-aspartate to produce beta-alanine for coenzyme A (CoA) biosynthesis. The chain is Probable L-tyrosine/L-aspartate decarboxylase from Methanothrix thermoacetophila (strain DSM 6194 / JCM 14653 / NBRC 101360 / PT) (Methanosaeta thermophila).